We begin with the raw amino-acid sequence, 303 residues long: Methionyl-tRNA formyltransferase (303 aa).

(6S)-5,6,7,8-tetrahydrofolate is bound at residue 110 to 113 (SLLP).

This sequence belongs to the Fmt family.

The catalysed reaction is L-methionyl-tRNA(fMet) + (6R)-10-formyltetrahydrofolate = N-formyl-L-methionyl-tRNA(fMet) + (6S)-5,6,7,8-tetrahydrofolate + H(+). Functionally, attaches a formyl group to the free amino group of methionyl-tRNA(fMet). The formyl group appears to play a dual role in the initiator identity of N-formylmethionyl-tRNA by promoting its recognition by IF2 and preventing the misappropriation of this tRNA by the elongation apparatus. This chain is Methionyl-tRNA formyltransferase, found in Campylobacter lari (strain RM2100 / D67 / ATCC BAA-1060).